Here is a 259-residue protein sequence, read N- to C-terminus: Ribose-5-phosphate isomerase (259 aa).

Belongs to the ribose 5-phosphate isomerase family.

It is found in the cytoplasm. The enzyme catalyses aldehydo-D-ribose 5-phosphate = D-ribulose 5-phosphate. Its pathway is carbohydrate degradation; pentose phosphate pathway; D-ribose 5-phosphate from D-ribulose 5-phosphate (non-oxidative stage): step 1/1. The chain is Ribose-5-phosphate isomerase (RKI1) from Vanderwaltozyma polyspora (strain ATCC 22028 / DSM 70294 / BCRC 21397 / CBS 2163 / NBRC 10782 / NRRL Y-8283 / UCD 57-17) (Kluyveromyces polysporus).